The following is a 430-amino-acid chain: Dihydroorotase (430 aa).

Positions 61 and 63 each coordinate Zn(2+). Residues 63–65 (HLR) and Asn95 each bind substrate. The Zn(2+) site is built by Asp153, His180, and His233. Asn279 is a substrate binding site. Asp306 lines the Zn(2+) pocket. Asp306 is an active-site residue. Position 310 (His310) interacts with substrate.

It belongs to the metallo-dependent hydrolases superfamily. DHOase family. Class I DHOase subfamily. Zn(2+) is required as a cofactor.

The enzyme catalyses (S)-dihydroorotate + H2O = N-carbamoyl-L-aspartate + H(+). The protein operates within pyrimidine metabolism; UMP biosynthesis via de novo pathway; (S)-dihydroorotate from bicarbonate: step 3/3. In terms of biological role, catalyzes the reversible cyclization of carbamoyl aspartate to dihydroorotate. This chain is Dihydroorotase, found in Caldicellulosiruptor saccharolyticus (strain ATCC 43494 / DSM 8903 / Tp8T 6331).